The sequence spans 446 residues: Glutamyl-tRNA reductase (446 aa).

Substrate is bound by residues 49 to 52 (TCNR), S109, 114 to 116 (ETQ), and Q120. The active-site Nucleophile is C50. NADP(+) is bound at residue 189 to 194 (GAGEMA).

The protein belongs to the glutamyl-tRNA reductase family. Homodimer.

The catalysed reaction is (S)-4-amino-5-oxopentanoate + tRNA(Glu) + NADP(+) = L-glutamyl-tRNA(Glu) + NADPH + H(+). Its pathway is porphyrin-containing compound metabolism; protoporphyrin-IX biosynthesis; 5-aminolevulinate from L-glutamyl-tRNA(Glu): step 1/2. Its function is as follows. Catalyzes the NADPH-dependent reduction of glutamyl-tRNA(Glu) to glutamate 1-semialdehyde (GSA). The protein is Glutamyl-tRNA reductase of Macrococcus caseolyticus (strain JCSC5402) (Macrococcoides caseolyticum).